The primary structure comprises 258 residues: UDP-2,3-diacylglucosamine hydrolase (258 aa).

5 residues coordinate Mn(2+): D15, H17, D48, N88, and H123. 88–89 (NR) contacts substrate. The substrate site is built by D131, S169, N173, K176, and H204. The Mn(2+) site is built by H204 and H206.

This sequence belongs to the LpxH family. The cofactor is Mn(2+).

It is found in the cell inner membrane. The catalysed reaction is UDP-2-N,3-O-bis[(3R)-3-hydroxytetradecanoyl]-alpha-D-glucosamine + H2O = 2-N,3-O-bis[(3R)-3-hydroxytetradecanoyl]-alpha-D-glucosaminyl 1-phosphate + UMP + 2 H(+). Its pathway is glycolipid biosynthesis; lipid IV(A) biosynthesis; lipid IV(A) from (3R)-3-hydroxytetradecanoyl-[acyl-carrier-protein] and UDP-N-acetyl-alpha-D-glucosamine: step 4/6. Hydrolyzes the pyrophosphate bond of UDP-2,3-diacylglucosamine to yield 2,3-diacylglucosamine 1-phosphate (lipid X) and UMP by catalyzing the attack of water at the alpha-P atom. Involved in the biosynthesis of lipid A, a phosphorylated glycolipid that anchors the lipopolysaccharide to the outer membrane of the cell. The polypeptide is UDP-2,3-diacylglucosamine hydrolase (Bordetella pertussis (strain Tohama I / ATCC BAA-589 / NCTC 13251)).